We begin with the raw amino-acid sequence, 234 residues long: Large ribosomal subunit protein uL1 (234 aa).

This sequence belongs to the universal ribosomal protein uL1 family. In terms of assembly, part of the 50S ribosomal subunit.

Functionally, binds directly to 23S rRNA. The L1 stalk is quite mobile in the ribosome, and is involved in E site tRNA release. In terms of biological role, protein L1 is also a translational repressor protein, it controls the translation of the L11 operon by binding to its mRNA. The chain is Large ribosomal subunit protein uL1 from Corynebacterium aurimucosum (strain ATCC 700975 / DSM 44827 / CIP 107346 / CN-1) (Corynebacterium nigricans).